Consider the following 465-residue polypeptide: Iron-sulfur cluster assembly SufBD family protein SAUSA300_0822 (465 aa).

The protein belongs to the iron-sulfur cluster assembly SufBD family.

This chain is Iron-sulfur cluster assembly SufBD family protein SAUSA300_0822, found in Staphylococcus aureus (strain USA300).